Here is a 1852-residue protein sequence, read N- to C-terminus: Chitin synthase csmA (1852 aa).

Residues 1–20 form a disordered region; sequence MVGTLPAGHTPSHVQSSLPS. The region spanning 1–787 is the Myosin motor domain; it reads MVGTLPAGHT…CWADLAKVGE (787 aa). N-linked (GlcNAc...) asparagine glycosylation is present at Asn-58. 102–109 lines the ATP pocket; the sequence is GESGAGKT. The segment at 599-646 is disordered; the sequence is SSKPLRMPSMARRKTSPASRLTFDATPAEDPYETESQTGSSAKNSSAK. Asn-642 carries an N-linked (GlcNAc...) asparagine glycan. An actin-binding region spans residues 667–691; it reads LDIVNKCLTSGNLNPYFVFCLKPND. Asn-840 carries an N-linked (GlcNAc...) asparagine glycan. 2 helical membrane-spanning segments follow: residues 895-915 and 930-950; these read WMAI…RYIG and FAIN…IVGF. The 60-residue stretch at 958-1017 folds into the Cytochrome b5 heme-binding domain; it reads QHVYSPAELSSHDGKDGHSSYTSIRGLVLDLGEFMDSHYPGIVPDSALKKYAGVDSTALF. Asn-1044 and Asn-1195 each carry an N-linked (GlcNAc...) asparagine glycan. A helical membrane pass occupies residues 1205-1225; the sequence is FILAISVLICSVIVFKFFAAL. Residues Asn-1428, Asn-1462, and Asn-1568 are each glycosylated (N-linked (GlcNAc...) asparagine). The next 3 membrane-spanning stretches (helical) occupy residues 1600 to 1620, 1626 to 1646, and 1653 to 1673; these read ISTI…VWLV, IPWT…IIFI, and MIGW…ALPL. One can recognise a DEK-C domain in the interval 1794–1849; it reads LPSDDAILSEIRDILRTADLMTVTKKNIKQELERRFGVNLDAKRPYINSATEAVLS.

The protein in the N-terminal section; belongs to the TRAFAC class myosin-kinesin ATPase superfamily. Myosin family. In the C-terminal section; belongs to the chitin synthase family. Class V subfamily. As to quaternary structure, binds F-actin via its N-terminal myosin motor-like domain (MMD). Interacts with kibesin kinA.

The protein resides in the cell membrane. It is found in the cell septum. The protein localises to the cell tip. It carries out the reaction [(1-&gt;4)-N-acetyl-beta-D-glucosaminyl](n) + UDP-N-acetyl-alpha-D-glucosamine = [(1-&gt;4)-N-acetyl-beta-D-glucosaminyl](n+1) + UDP + H(+). Polymerizes chitin, a structural polymer of the cell wall and septum, by transferring the sugar moiety of UDP-GlcNAc to the non-reducing end of the growing chitin polymer. Plays an important role in polarized hyphal cell wall synthesis and maintenance of cell wall integrity. Its role in growth and morphogenesis is particularly important under low osmotic conditions. The sequence is that of Chitin synthase csmA from Emericella nidulans (Aspergillus nidulans).